The chain runs to 338 residues: RNA 3'-terminal phosphate cyclase (338 aa).

Residues glutamine 103 and 283-287 (YLADQ) contribute to the ATP site. Histidine 308 (tele-AMP-histidine intermediate) is an active-site residue.

This sequence belongs to the RNA 3'-terminal cyclase family. Type 1 subfamily.

The protein localises to the cytoplasm. It catalyses the reaction a 3'-end 3'-phospho-ribonucleotide-RNA + ATP = a 3'-end 2',3'-cyclophospho-ribonucleotide-RNA + AMP + diphosphate. In terms of biological role, catalyzes the conversion of 3'-phosphate to a 2',3'-cyclic phosphodiester at the end of RNA. The mechanism of action of the enzyme occurs in 3 steps: (A) adenylation of the enzyme by ATP; (B) transfer of adenylate to an RNA-N3'P to produce RNA-N3'PP5'A; (C) and attack of the adjacent 2'-hydroxyl on the 3'-phosphorus in the diester linkage to produce the cyclic end product. The biological role of this enzyme is unknown but it is likely to function in some aspects of cellular RNA processing. This is RNA 3'-terminal phosphate cyclase from Escherichia coli O7:K1 (strain IAI39 / ExPEC).